We begin with the raw amino-acid sequence, 368 residues long: L-arabinitol 4-dehydrogenase (368 aa).

Zn(2+) is bound by residues Cys-52, His-77, Glu-78, Cys-107, Cys-110, Cys-113, Cys-121, and Glu-162. Asp-210, Arg-215, and Ile-282 together coordinate NAD(+).

Belongs to the zinc-containing alcohol dehydrogenase family. Homotetramer. It depends on Zn(2+) as a cofactor.

The enzyme catalyses L-arabinitol + NAD(+) = L-xylulose + NADH + H(+). In terms of biological role, plays a key role in liamocins biosynthesis by providing the arabinol moity that is linked to 3,5-dihydroxydecanoic acid (provided by the HR-PKS PKS1) via ester bond formation catalyzed by the esterase EST1. This is L-arabinitol 4-dehydrogenase from Aureobasidium melanogenum (Aureobasidium pullulans var. melanogenum).